Consider the following 275-residue polypeptide: Envelope glycoprotein (275 aa).

Cystine bridges form between cysteine 1/cysteine 10, cysteine 18/cysteine 27, and cysteine 58/cysteine 62. Residue asparagine 122 is glycosylated (N-linked (GlcNAc...) asparagine; by host). 4 disulfide bridges follow: cysteine 164-cysteine 194, cysteine 187-cysteine 239, cysteine 204-cysteine 209, and cysteine 240-cysteine 245.

It belongs to the hantavirus envelope glycoprotein family. As to quaternary structure, homodimer. Homotetramer; forms heterotetrameric Gn-Gc spikes in the pre-fusion conformation. Homotrimer; forms homotrimer in the post-fusion conformation at acidic pH. Interacts (via C-terminus) with the nucleoprotein. In terms of processing, envelope polyprotein precursor is quickly cleaved in vivo just after synthesis, presumably by host signal peptidase.

Its subcellular location is the virion membrane. The protein resides in the host cell surface. It localises to the host Golgi apparatus membrane. It is found in the host endoplasmic reticulum membrane. Forms homotetramers with glycoprotein N at the surface of the virion. Attaches the virion to host cell receptors including integrin ITGAV/ITGB3. This attachment induces virion internalization predominantly through clathrin-dependent endocytosis. Class II fusion protein that promotes fusion of viral membrane with host endosomal membrane after endocytosis of the virion. The sequence is that of Envelope glycoprotein (GP) from Homo sapiens (Human).